A 347-amino-acid polypeptide reads, in one-letter code: Heat-inducible transcription repressor HrcA (347 aa).

The protein belongs to the HrcA family.

Functionally, negative regulator of class I heat shock genes (grpE-dnaK-dnaJ and groELS operons). Prevents heat-shock induction of these operons. This chain is Heat-inducible transcription repressor HrcA, found in Lactococcus lactis subsp. cremoris (strain SK11).